We begin with the raw amino-acid sequence, 361 residues long: MSIDQRLQLITRNAAEIITIDELRKKIESEEKLKGYIGFEPSGLFHIGWLIWTQKVKDLVEAGVNMTLLRATWHAWINDKLGGDLSLIKMAADYTVEVIKNYGVDTTKLNIVDADDMVKEKDYWALVIKVAKNASLARIKRALTIMGRRAEEAEIDASKLIYPAMQVSDIFYLDLDIALGGTDQRKAHMLARDVAEKMGKKKIVSIHTPLLVGLQGGQRMSITEGMEEDDIQAEIKMSKSKPESAIFVSDSREDVERKIMGAYCPKGVAENNPILQILKYIIFPRYNFVKIERDIRYGGDVEFKDYEELERAYIEGKIHPMDLKKATARRLNEILEPIRKSLERKPEFEEMIQKISKSVTR.

L-tyrosine contacts are provided by Tyr36, Tyr162, Gln166, Asp169, and Gln184. A 'KMSKS' region motif is present at residues 236-240 (KMSKS). Residue Lys239 coordinates ATP.

Belongs to the class-I aminoacyl-tRNA synthetase family. TyrS type 4 subfamily. Homodimer.

Its subcellular location is the cytoplasm. It catalyses the reaction tRNA(Tyr) + L-tyrosine + ATP = L-tyrosyl-tRNA(Tyr) + AMP + diphosphate + H(+). Its function is as follows. Catalyzes the attachment of tyrosine to tRNA(Tyr) in a two-step reaction: tyrosine is first activated by ATP to form Tyr-AMP and then transferred to the acceptor end of tRNA(Tyr). The sequence is that of Tyrosine--tRNA ligase from Saccharolobus islandicus (strain Y.N.15.51 / Yellowstone #2) (Sulfolobus islandicus).